Here is a 184-residue protein sequence, read N- to C-terminus: Dual specificity protein phosphatase 22 (184 aa).

The N-myristoyl glycine moiety is linked to residue Gly-2. Residues 4 to 144 (GMSQILPGLY…LQEFEKHEVH (141 aa)) form the Tyrosine-protein phosphatase domain. Cys-88 functions as the Phosphocysteine intermediate in the catalytic mechanism. A protein contacts are provided by Leu-89, Ala-90, Val-92, Ser-93, and Arg-94.

Belongs to the protein-tyrosine phosphatase family. Non-receptor class dual specificity subfamily. As to quaternary structure, monomer. Interacts with LCK; the interaction is direct. Interacts with UBR2; the interaction is direct. In terms of processing, myristoylation regulates subcellular location, and is necessary for activation of JNK.

It localises to the cytoplasm. The enzyme catalyses O-phospho-L-tyrosyl-[protein] + H2O = L-tyrosyl-[protein] + phosphate. The catalysed reaction is O-phospho-L-seryl-[protein] + H2O = L-seryl-[protein] + phosphate. It carries out the reaction O-phospho-L-threonyl-[protein] + H2O = L-threonyl-[protein] + phosphate. Functionally, dual specificity phosphatase; can dephosphorylate both phosphotyrosine and phosphoserine or phosphothreonine residues. Activates the JNK signaling pathway. Inhibits T-cell receptor signaling and T-cell mediated immune responses, acting, at least in part, by inducing degradation of E3 ubiquitin ligase UBR2. Dephosphorylates and thereby induces 'Lys-48'-linked ubiquitination of UBR2, leading to proteasomal degradation of UBR2. Dephosphorylates and thereby inactivates tyrosine kinase LCK. Inhibits UBR2-mediated 'Lys-63'-linked ubiquitination of LCK. May play a role in B-cell receptor (BCR) signaling and B-cell function. The sequence is that of Dual specificity protein phosphatase 22 (Dusp22) from Mus musculus (Mouse).